Consider the following 106-residue polypeptide: U1-lycotoxin-Ls1b (106 aa).

The signal sequence occupies residues 1 to 19; it reads MKVLVVVALLVTLISYSSS. Residues 20–40 constitute a propeptide that is removed on maturation; sequence EGIDDPEADELLSLMANEQTR. 4 disulfides stabilise this stretch: Cys-43/Cys-58, Cys-50/Cys-67, Cys-57/Cys-85, and Cys-69/Cys-83.

The protein belongs to the neurotoxin 19 (CSTX) family. 04 (U1-Lctx) subfamily. In terms of tissue distribution, expressed by the venom gland.

Its subcellular location is the secreted. The protein is U1-lycotoxin-Ls1b of Lycosa singoriensis (Wolf spider).